The following is a 59-amino-acid chain: Venom protein 37.1 (59 aa).

Positions 1 to 18 (MVSTLMIASVKLRLYCTA) are cleaved as a signal peptide.

The protein belongs to the non-disulfide-bridged peptide (NDBP) superfamily. Long chain multifunctional peptide (group 2) family. Expressed by the venom gland.

It is found in the secreted. This is Venom protein 37.1 from Lychas mucronatus (Chinese swimming scorpion).